Here is a 262-residue protein sequence, read N- to C-terminus: Indole-3-glycerol phosphate synthase (262 aa).

This sequence belongs to the TrpC family.

The enzyme catalyses 1-(2-carboxyphenylamino)-1-deoxy-D-ribulose 5-phosphate + H(+) = (1S,2R)-1-C-(indol-3-yl)glycerol 3-phosphate + CO2 + H2O. Its pathway is amino-acid biosynthesis; L-tryptophan biosynthesis; L-tryptophan from chorismate: step 4/5. This chain is Indole-3-glycerol phosphate synthase, found in Clostridium kluyveri (strain NBRC 12016).